Reading from the N-terminus, the 316-residue chain is Olfactory receptor 6B9 (316 aa).

Over 1-22 (MENITNISEFILMGFPTAPWLQ) the chain is Extracellular. N-linked (GlcNAc...) asparagine glycans are attached at residues Asn3 and Asn6. Residues 23–43 (ILLFSIFFITYVFVLLENLVI) form a helical membrane-spanning segment. Residues 44-64 (ILTVWVTGSLHKPMYYFLSTM) are Cytoplasmic-facing. Residues 65–85 (SFLEAWYISVTVPKMLAGFLF) traverse the membrane as a helical segment. The Extracellular segment spans residues 86–97 (RPNTISFLGCMT). Cys95 and Cys187 form a disulfide bridge. Residues 98-118 (QLYFFMSLACTECVLLAAMAY) traverse the membrane as a helical segment. At 119–132 (DRYVAICWPLRYPV) the chain is on the cytoplasmic side. Residues 133-153 (MMTTGFCVQLTISSWVSGFTI) traverse the membrane as a helical segment. Residues 154 to 199 (SMAKVYFISRVAFCGNNVLNHFFCDVSPILKLACMNLSMAETVDFA) lie on the Extracellular side of the membrane. Residues 200 to 220 (LAIVILIFPLSATVLSYGFIV) traverse the membrane as a helical segment. At 221–237 (STVLQIPSATGQRKAFS) the chain is on the cytoplasmic side. A helical membrane pass occupies residues 238–258 (TCASHLTVVVIFYTAVIFMYV). Residues 259–269 (RPRAIASFNSN) are Extracellular-facing. A helical transmembrane segment spans residues 270 to 290 (KLISAIYAVFTPMLNPIIYCL). At 291 to 316 (RNKEVKDAIRKTIAGGRAPALGESIS) the chain is on the cytoplasmic side.

Belongs to the G-protein coupled receptor 1 family. Olfactory epithelium.

The protein localises to the cell membrane. Functionally, odorant receptor. This is Olfactory receptor 6B9 from Mus musculus (Mouse).